Consider the following 121-residue polypeptide: Mediator of RNA polymerase II transcription subunit 22 (121 aa).

The protein belongs to the Mediator complex subunit 22 family. As to quaternary structure, component of the Mediator complex.

The protein resides in the nucleus. In terms of biological role, component of the Mediator complex, a coactivator involved in the regulated transcription of nearly all RNA polymerase II-dependent genes. Mediator functions as a bridge to convey information from gene-specific regulatory proteins to the basal RNA polymerase II transcription machinery. Mediator is recruited to promoters by direct interactions with regulatory proteins and serves as a scaffold for the assembly of a functional preinitiation complex with RNA polymerase II and the general transcription factors. The polypeptide is Mediator of RNA polymerase II transcription subunit 22 (SRB6) (Eremothecium gossypii (strain ATCC 10895 / CBS 109.51 / FGSC 9923 / NRRL Y-1056) (Yeast)).